The sequence spans 310 residues: Olfactory receptor 2A25 (310 aa).

Residues 1-24 are Extracellular-facing; the sequence is MGGNQTSITEFLLLGFPIGPRIQM. N-linked (GlcNAc...) asparagine glycosylation occurs at N4. The chain crosses the membrane as a helical span at residues 25 to 48; that stretch reads LLFGLFSLFYIFILLGNGTILGLI. Over 49–56 the chain is Cytoplasmic; that stretch reads SLDSRLHT. A helical transmembrane segment spans residues 57 to 78; the sequence is PMYFFLSHLAVVDIACACSTVP. The Extracellular segment spans residues 79–99; sequence QMLVNLLHPAKPISFAGCMTQ. A disulfide bridge links C96 with C188. A helical transmembrane segment spans residues 100–119; it reads MFLFLSFAHTECLLLVVMSY. Topologically, residues 120-138 are cytoplasmic; that stretch reads DRYVAICHPLRYSTIMTWK. A helical transmembrane segment spans residues 139 to 157; the sequence is VCITLALTSWILGVLLALV. The Extracellular portion of the chain corresponds to 158–195; that stretch reads HLVLLLPLSFCGPQKLNHFFCEIMAVLKLACADTHINE. A helical membrane pass occupies residues 196–218; sequence VMVLAGAVSVLVGAFFSTVISYV. Residues 219 to 235 are Cytoplasmic-facing; the sequence is HILCAILKIQSGEGCQK. The helical transmembrane segment at 236 to 258 threads the bilayer; it reads AFSICSSHLCVVGLFYGTAIIMY. The Extracellular portion of the chain corresponds to 259–271; it reads VEPQYESPKEQKK. A helical transmembrane segment spans residues 272–291; that stretch reads YLLLFHSLFNPMLNPLIYSL. Residues 292 to 310 lie on the Cytoplasmic side of the membrane; the sequence is RNKEVQGTLKRMLEKKRTS.

It belongs to the G-protein coupled receptor 1 family.

It is found in the cell membrane. Its function is as follows. Odorant receptor. The polypeptide is Olfactory receptor 2A25 (OR2A25) (Homo sapiens (Human)).